The chain runs to 273 residues: MKNKTKIIISGALGRMGKILIKETKKNKLIKLVYALINNNIDIKNHNQFYKVKEKKKFITLNNLKKKKKILKFDTIIDFSSPKYSIKIIKYCLKNNKKIVLGTTGFNTEQIKIINNASKKIPIIYSPNFSIGINIIYKILKNISKILGKNSDIEIIESHHRNKIDAPSGTALQLGKIISKSMKWNFKKSAIFSRYGNIGIRKKKRIGFSTIREGNTIGEHTVLFSNKYEKISIFHKAIHRSVFAKGALKAAIWISRKKNGLYNMSDMLKKIKI.

Residues 11 to 16 (GALGRM), 102 to 104 (GTT), and 126 to 129 (SPNF) each bind NAD(+). Catalysis depends on His-159, which acts as the Proton donor/acceptor. His-160 lines the (S)-2,3,4,5-tetrahydrodipicolinate pocket. Lys-163 (proton donor) is an active-site residue. Position 169–170 (169–170 (GT)) interacts with (S)-2,3,4,5-tetrahydrodipicolinate.

The protein belongs to the DapB family. Homotetramer.

It is found in the cytoplasm. The enzyme catalyses (S)-2,3,4,5-tetrahydrodipicolinate + NAD(+) + H2O = (2S,4S)-4-hydroxy-2,3,4,5-tetrahydrodipicolinate + NADH + H(+). It catalyses the reaction (S)-2,3,4,5-tetrahydrodipicolinate + NADP(+) + H2O = (2S,4S)-4-hydroxy-2,3,4,5-tetrahydrodipicolinate + NADPH + H(+). The protein operates within amino-acid biosynthesis; L-lysine biosynthesis via DAP pathway; (S)-tetrahydrodipicolinate from L-aspartate: step 4/4. Catalyzes the conversion of 4-hydroxy-tetrahydrodipicolinate (HTPA) to tetrahydrodipicolinate. This Buchnera aphidicola subsp. Cinara cedri (strain Cc) protein is 4-hydroxy-tetrahydrodipicolinate reductase.